A 145-amino-acid polypeptide reads, in one-letter code: D-aminoacyl-tRNA deacylase (145 aa).

Positions 137–138 (GP) match the Gly-cisPro motif, important for rejection of L-amino acids motif.

The protein belongs to the DTD family. As to quaternary structure, homodimer.

The protein localises to the cytoplasm. The enzyme catalyses glycyl-tRNA(Ala) + H2O = tRNA(Ala) + glycine + H(+). The catalysed reaction is a D-aminoacyl-tRNA + H2O = a tRNA + a D-alpha-amino acid + H(+). Functionally, an aminoacyl-tRNA editing enzyme that deacylates mischarged D-aminoacyl-tRNAs. Also deacylates mischarged glycyl-tRNA(Ala), protecting cells against glycine mischarging by AlaRS. Acts via tRNA-based rather than protein-based catalysis; rejects L-amino acids rather than detecting D-amino acids in the active site. By recycling D-aminoacyl-tRNA to D-amino acids and free tRNA molecules, this enzyme counteracts the toxicity associated with the formation of D-aminoacyl-tRNA entities in vivo and helps enforce protein L-homochirality. This chain is D-aminoacyl-tRNA deacylase, found in Pseudomonas paraeruginosa (strain DSM 24068 / PA7) (Pseudomonas aeruginosa (strain PA7)).